Consider the following 517-residue polypeptide: MALSSRAHAFSVEALMGRPSKRKAQDPREEMQPELQEEQFVEEGEEILRSPSRDSQQPEKRLKAESSKTVFSCSDESNSQESLQEESVIQVELQGSDLWKRFHDIGTEMIITKAGRRMFPSVRIKVKGMDPVKQYYVILDVVPVDSKRYRYVYHSSQWMVAGNTDHSCITPRFYVHPDSPCSGENWMRQIISFDRVKLTNNEMDDKGHIILQSMHKYNPRVHVVEQDSRIDLSLIESFPTEGVKTFSFKETEFTTVTAYQNQQITKLKIDRNPFAKGFRDPGRNRGVLDGFLETYPWMPSFSMDFKTFVTDTQSGSSGSSPVTSSGGAPSPLNSLLSPSCSPPMVYIPPSSFGMTYPDAYLHSVNIPFCYRICPTNNWRSQPFVLPTPERLPSFIIPQTLPPLMMEVPVVSSRGIINPNSGLHEDCNGQCLQASHSANQMLYGLQNPGNIFHPNAIAQEAISYPFHPPNGCYRYTISMPPRLENVASHLSENGTSQISFTEGSCDHSHWYPAINHYL.

Residues 1–83 are disordered; the sequence is MALSSRAHAF…SDESNSQESL (83 aa). Over residues 35-45 the composition is skewed to acidic residues; that stretch reads LQEEQFVEEGE. The segment covering 46–66 has biased composition (basic and acidic residues); the sequence is EILRSPSRDSQQPEKRLKAES. Over residues 74 to 83 the composition is skewed to low complexity; it reads SDESNSQESL. A DNA-binding region (T-box) is located at residues 93–280; the sequence is LQGSDLWKRF…RNPFAKGFRD (188 aa). The segment at 312–333 is disordered; sequence TQSGSSGSSPVTSSGGAPSPLN. The span at 314–333 shows a compositional bias: low complexity; that stretch reads SGSSGSSPVTSSGGAPSPLN.

It is found in the nucleus. Functionally, probable transcriptional regulator involved in developmental processes. This is major determinant crucial to palatogenesis. The polypeptide is T-box transcription factor TBX22 (Tbx22) (Mus musculus (Mouse)).